The following is a 600-amino-acid chain: MAAPLTAAAALRLGRGLSHRRAFLLRRRYSPAPLAPSPCAAPRCLSSAAHPPPPPPRRLARSGPSRPLAASAATAVSEAQTDLESGPVTASKGRIYHETYGCQMNVNDMEIVLSIMKNEGYDEIVPDPESAEIIFINTCAIRDNAEQKVWQRLNYFWFLKRQWKANVAAGRSRSLRPPKIAVLGCMAERLKEKILDSDKMVDVVCGPDAYRDLPRLLQEVDYGQKGINTLLSLEETYADITPVRISDNSVTAFVSIMRGCNNMCSFCIVPFTRGRERSRPVSSIVREVGELWKAGVKEVMLLGQNVNSYNDTSEVEELEPGKNWELSEGFSSMCKVKNMGLRFADLLDQLSLEYPEMRFRFTSPHPKDYPDELLYLMRDRHNVCKLIHMPAQSGSSAVLERMRRGYTREAYLELVQKIRSIIPDVGLSSDFISGFCGETEEEHAETLTLVRAVGYDMAYMFAYSMREKTHAHRNYVDDVPDDVKQRRLAELISTFRETTAKIYDSQVGTVQLVLVEGPNKRAPETEMIGKTDRGHRVSFASVPVPHTFEGDELRKPVVGDFIEVKITKSSTASLSGDVIARTSLSKFYKNHSSEAHAVAA.

The disordered stretch occupies residues 45 to 66 (LSSAAHPPPPPPRRLARSGPSR). Residues 93-222 (GRIYHETYGC…LPRLLQEVDY (130 aa)) form the MTTase N-terminal domain. 6 residues coordinate [4Fe-4S] cluster: C102, C139, C185, C260, C264, and C267. Residues 246–501 (SDNSVTAFVS…ISTFRETTAK (256 aa)) form the Radical SAM core domain. The TRAM domain maps to 504–580 (DSQVGTVQLV…TASLSGDVIA (77 aa)).

The protein belongs to the methylthiotransferase family. MiaB subfamily. Requires [4Fe-4S] cluster as cofactor.

Functionally, potential regulator of CDK5 activity. This is CDK5RAP1-like protein from Oryza sativa subsp. japonica (Rice).